Here is a 239-residue protein sequence, read N- to C-terminus: Diablo IAP-binding mitochondrial protein (239 aa).

Residues 1–21 (MAALKSWLSRSVTSFFRYRQC) constitute a mitochondrion transit peptide. The short motif at 56-60 (AVPIA) is the IAP-binding element. Residues 217–239 (RQKTQEEGEERAESEQEAYLRED) are disordered.

This sequence belongs to the Smac/DIABLO protein family. As to quaternary structure, homodimer. Interacts with BIRC2/c-IAP1 (via BIR3 domain). Interacts with BIRC6/BRUCE; inhibits BIRC6 activity. Interacts with BIRC7/livin. Interacts with XIAP/BIRC4 (via BIR3 domain). Interacts with the monomeric and dimeric form of BIRC5/survivin. Interacts with AREL1 (via HECT domain); in the cytoplasm following induction of apoptosis. Interacts with BEX3. In terms of processing, ubiquitinated by BIRC7/livin. Ubiquitinated by BIRC6. Post-translationally, the precursor form is proteolytically cleaved by mitochondrial processing peptidase MPP to remove the transit peptide and produce an intermediate form. This is then processed by PARL to produce the mature cleaved form which is released from mitochondria into the cytosol in apoptotic cells. Ubiquitously expressed with highest expression in testis. Expression is also high in heart, liver, kidney, spleen, prostate and ovary. Low in brain, lung, thymus and peripheral blood leukocytes. Isoform 3 is ubiquitously expressed.

The protein localises to the mitochondrion. It is found in the cytoplasm. The protein resides in the cytosol. Its function is as follows. Promotes apoptosis by activating caspases in the cytochrome c/Apaf-1/caspase-9 pathway. Acts by opposing the inhibitory activity of inhibitor of apoptosis proteins (IAP). Inhibits the activity of BIRC6/BRUCE by inhibiting its binding to caspases. Functionally, attenuates the stability and apoptosis-inhibiting activity of XIAP/BIRC4 by promoting XIAP/BIRC4 ubiquitination and degradation through the ubiquitin-proteasome pathway. Also disrupts XIAP/BIRC4 interacting with processed caspase-9 and promotes caspase-3 activation. In terms of biological role, defective in the capacity to down-regulate the XIAP/BIRC4 abundance. This Homo sapiens (Human) protein is Diablo IAP-binding mitochondrial protein.